Here is a 119-residue protein sequence, read N- to C-terminus: MSTTRGVSSSSAAAALALLLLFALCFFSFHSAAAARAVPRDEHQENGGVKAVAAVAADQLVLQLEGDTGNGDEVSELMGAAEEEAAACEEGKNNDECVQRRLLSDAHLDYIYTQHKNKP.

The signal sequence occupies residues 1 to 34 (MSTTRGVSSSSAAAALALLLLFALCFFSFHSAAA). The propeptide occupies 35–109 (ARAVPRDEHQ…RRLLSDAHLD (75 aa)). Residues Y110 and Y112 each carry the sulfotyrosine modification. Residues 115–119 (HKNKP) constitute a propeptide that is removed on maturation.

This sequence belongs to the phytosulfokine family. In terms of processing, sulfation is important for activity and for the binding to a putative membrane receptor. PSK-alpha is produced by endopeptidase digestion. PSK-beta is produced from PSK-alpha by exopeptidase digestion.

The protein localises to the secreted. In terms of biological role, promotes plant cell differentiation, organogenesis and somatic embryogenesis as well as cell proliferation. The polypeptide is Phytosulfokines 2 (PSK2) (Oryza sativa subsp. indica (Rice)).